The primary structure comprises 263 residues: Undecaprenyl-diphosphatase 2 (263 aa).

Helical transmembrane passes span 15-37 (GLTEFLPVSSTGHMILTGHLIGF), 42-62 (AKVFEVVIQLGSILAVVVIFW), 79-99 (SLNLLHIIIGMIPAGVLGVLF), 107-127 (LFGPGPVVISLVAGGILMIVA), 142-162 (ITYKQAFTIGMFQCLALWPGF), 183-203 (AEYTFILAVPMMVAASGLDLI), 216-236 (LFVTGFVTAFVVAMLAIVSFL), and 242-262 (VKLTPFAYYRFILAAVFYFFI).

It belongs to the UppP family.

It is found in the cell membrane. It carries out the reaction di-trans,octa-cis-undecaprenyl diphosphate + H2O = di-trans,octa-cis-undecaprenyl phosphate + phosphate + H(+). Catalyzes the dephosphorylation of undecaprenyl diphosphate (UPP). Confers resistance to bacitracin. In Bacillus cereus (strain ATCC 14579 / DSM 31 / CCUG 7414 / JCM 2152 / NBRC 15305 / NCIMB 9373 / NCTC 2599 / NRRL B-3711), this protein is Undecaprenyl-diphosphatase 2.